The chain runs to 209 residues: Phosphopantothenoylcysteine decarboxylase (209 aa).

FMN-binding positions include 28 to 30 (GSV) and 53 to 55 (TKS). H90 functions as the Proton donor in the catalytic mechanism. FMN contacts are provided by residues 106-109 (SANT) and A140. Residues N142, R172, and A174 each coordinate N-[(R)-4-phosphopantothenoyl]-L-cysteine. C175 (proton donor) is an active-site residue. An N-[(R)-4-phosphopantothenoyl]-L-cysteine-binding site is contributed by M183.

Belongs to the HFCD (homooligomeric flavin containing Cys decarboxylase) superfamily. In terms of assembly, homotrimer. Requires FMN as cofactor. In terms of tissue distribution, expressed in roots, shoots, leaves, flowers, developing siliques and seeds with highest expression in seed embryos and phloem.

It catalyses the reaction N-[(R)-4-phosphopantothenoyl]-L-cysteine + H(+) = (R)-4'-phosphopantetheine + CO2. It functions in the pathway cofactor biosynthesis; coenzyme A biosynthesis; CoA from (R)-pantothenate: step 3/5. Functionally, involved in plant growth, and salt and osmotic tolerance. Catalyzes the decarboxylation of 4'-phosphopantothenoylcysteine to 4'-phosphopantetheine, a key step in coenzyme A biosynthesis. The enzyme is also able to decarboxylate pantothenoylcysteine to pantothenoylcysteamine. The protein is Phosphopantothenoylcysteine decarboxylase of Arabidopsis thaliana (Mouse-ear cress).